Reading from the N-terminus, the 234-residue chain is Peroxiredoxin (234 aa).

In terms of domain architecture, Thioredoxin spans Pro6 to Val161. The active-site Cysteine sulfenic acid (-SOH) intermediate is Cys48. Arg124 is a substrate binding site. A disulfide bridge links Cys203 with Cys209.

This sequence belongs to the peroxiredoxin family. Prx6 subfamily. In terms of assembly, homodecamer. Pentamer of dimers that assemble into a ring structure.

The protein resides in the cytoplasm. It carries out the reaction a hydroperoxide + [thioredoxin]-dithiol = an alcohol + [thioredoxin]-disulfide + H2O. Functionally, thiol-specific peroxidase that catalyzes the reduction of hydrogen peroxide and organic hydroperoxides to water and alcohols, respectively. Plays a role in cell protection against oxidative stress by detoxifying peroxides. The chain is Peroxiredoxin from Ignicoccus hospitalis (strain KIN4/I / DSM 18386 / JCM 14125).